The sequence spans 96 residues: Putative membrane protein insertion efficiency factor (96 aa).

This sequence belongs to the UPF0161 family.

The protein resides in the cell inner membrane. Its function is as follows. Could be involved in insertion of integral membrane proteins into the membrane. This is Putative membrane protein insertion efficiency factor from Borreliella afzelii (strain PKo) (Borrelia afzelii).